Consider the following 248-residue polypeptide: tRNA (guanine-N(1)-)-methyltransferase (248 aa).

Residues Gly-113 and Ile-133–Leu-138 each bind S-adenosyl-L-methionine. Residues Arg-227–Gly-248 form a disordered region. A compositionally biased stretch (basic and acidic residues) spans Ala-234 to Gly-248.

Belongs to the RNA methyltransferase TrmD family. As to quaternary structure, homodimer.

The protein resides in the cytoplasm. The enzyme catalyses guanosine(37) in tRNA + S-adenosyl-L-methionine = N(1)-methylguanosine(37) in tRNA + S-adenosyl-L-homocysteine + H(+). Specifically methylates guanosine-37 in various tRNAs. The chain is tRNA (guanine-N(1)-)-methyltransferase from Rhodopseudomonas palustris (strain TIE-1).